Here is a 693-residue protein sequence, read N- to C-terminus: CREB-regulated transcription coactivator 2 (693 aa).

A compositionally biased stretch (polar residues) spans 1 to 20; sequence MATSGANGPGSATASASNPR. Positions 1 to 30 are disordered; that stretch reads MATSGANGPGSATASASNPRKFSEKIALQK. Alanine 2 is subject to N-acetylalanine. Asymmetric dimethylarginine; by PRMT6 is present on arginine 51. 3 positions are modified to phosphoserine: serine 70, serine 86, and serine 90. An asymmetric dimethylarginine; by PRMT6 mark is found at arginine 99, arginine 120, and arginine 123. Serine 136 carries the post-translational modification Phosphoserine. Arginine 161 and arginine 168 each carry asymmetric dimethylarginine; by PRMT6. Threonine 169 is modified (phosphothreonine). At serine 171 the chain carries Phosphoserine; by AMPK, MARK2, SIK1 and SIK2. The residue at position 192 (threonine 192) is a Phosphothreonine. Lysine 234 is covalently cross-linked (Glycyl lysine isopeptide (Lys-Gly) (interchain with G-Cter in SUMO2)). The Nuclear export signal motif lies at 271–287; the sequence is TGGSLPDLTNLHFPPPL. Residue serine 274 is modified to Phosphoserine; by MARK2. Disordered stretches follow at residues 282-306 and 328-554; these read HFPPPLPTPLDPEETAYPSLSGGNS and GYDA…MSDF. Residues serine 306, serine 368, serine 393, serine 433, and serine 456 each carry the phosphoserine modification. 2 stretches are compositionally biased toward low complexity: residues 331-378 and 386-415; these read APGL…SSLA and SLGHPSLSAPALSSSSSSSSTSSPVLGAPS. Residues 447–468 are compositionally biased toward polar residues; the sequence is SQQQLPKQFSPTMSPTLSSITQ. Tyrosine 488 carries the post-translational modification Phosphotyrosine. A phosphoserine mark is found at serine 489, serine 490, and serine 492. Over residues 498 to 507 the composition is skewed to polar residues; that stretch reads QPHTPKSLQQ. Residue threonine 501 is modified to Phosphothreonine. The segment covering 509-529 has biased composition (low complexity); the sequence is GLPSQSCSVQSSGGQPPGRQS. 3 positions are modified to phosphoserine: serine 613, serine 623, and serine 624.

It belongs to the TORC family. Binds, as a tetramer, through its N-terminal region, with the bZIP domain of CREB1. 'Arg-314' in the bZIP domain of CREB1 is essential for this interaction. Interaction, via its C-terminal, with TAF4, enhances recruitment of TAF4 to CREB1. Interacts with SIK2. Interacts with 14-3-3 proteins, YWHAB and YWHAG. Interacts (probably when phosphorylated at Ser-171) with YWHAE. Interacts with calmodulin-dependent catalytic subunit PPP3CA/calcineurin A. Interaction with COP1 mediates nuclear export and degradation of CRTC2. In terms of assembly, (Microbial infection) Interaction with the human T-cell leukemia virus type 1 (HTLV-1) Tax protein is essential for optimal transcription activation by Tax. Phosphorylation/dephosphorylation states of Ser-171 are required for regulating transduction of CREB activity. CRTCs/TORCs are inactive when phosphorylated, and active when dephosphorylated at this site. This primary site of phosphorylation, is regulated by cAMP and calcium levels and is dependent on the phosphorylation of SIKs (SIK1 and SIK2) by LKB1. Following adenylyl cyclase activation, dephosphorylated at Ser-171 by PPP3CA/calcineurin A resulting in CRTC2 dissociation from 14-3-3 proteins and PPP3CA. Both insulin and AMPK increase this phosphorylation of CRTC2 while glucagon suppresses it. Phosphorylation at Ser-274 by MARK2 is induced under low glucose conditions and dephosphorylated in response to glucose influx. Phosphorylation at Ser-274 promotes interaction with 14-3-3 proteins and translocation to the cytoplasm. In terms of processing, asymmetric dimethylation of arginine resisues by PRMT6 enhances the association of CRTC2 with CREB on the promoters of gluconeogenic genes. As to expression, most abundantly expressed in the thymus. Present in both B and T-lymphocytes. Highly expressed in HEK293T cells and in insulinomas. High levels also in spleen, ovary, muscle and lung, with highest levels in muscle. Lower levels found in brain, colon, heart, kidney, prostate, small intestine and stomach. Weak expression in liver and pancreas.

Its subcellular location is the cytoplasm. The protein localises to the nucleus. Functionally, transcriptional coactivator for CREB1 which activates transcription through both consensus and variant cAMP response element (CRE) sites. Acts as a coactivator, in the SIK/TORC signaling pathway, being active when dephosphorylated and acts independently of CREB1 'Ser-133' phosphorylation. Enhances the interaction of CREB1 with TAF4. Regulates gluconeogenesis as a component of the LKB1/AMPK/TORC2 signaling pathway. Regulates the expression of specific genes such as the steroidogenic gene, StAR. Potent coactivator of PPARGC1A and inducer of mitochondrial biogenesis in muscle cells. Also coactivator for TAX activation of the human T-cell leukemia virus type 1 (HTLV-1) long terminal repeats (LTR). The sequence is that of CREB-regulated transcription coactivator 2 (CRTC2) from Homo sapiens (Human).